The following is a 488-amino-acid chain: 3-octaprenyl-4-hydroxybenzoate carboxy-lyase (488 aa).

A Mn(2+)-binding site is contributed by Asn-172. Prenylated FMN is bound by residues 175-177 (IYR), 189-191 (RWL), and 194-195 (RG). Glu-238 contacts Mn(2+). Asp-287 acts as the Proton donor in catalysis.

This sequence belongs to the UbiD family. As to quaternary structure, homohexamer. Requires prenylated FMN as cofactor. Mn(2+) is required as a cofactor.

The protein resides in the cell membrane. The catalysed reaction is a 4-hydroxy-3-(all-trans-polyprenyl)benzoate + H(+) = a 2-(all-trans-polyprenyl)phenol + CO2. It participates in cofactor biosynthesis; ubiquinone biosynthesis. Catalyzes the decarboxylation of 3-octaprenyl-4-hydroxy benzoate to 2-octaprenylphenol, an intermediate step in ubiquinone biosynthesis. This Halorhodospira halophila (strain DSM 244 / SL1) (Ectothiorhodospira halophila (strain DSM 244 / SL1)) protein is 3-octaprenyl-4-hydroxybenzoate carboxy-lyase.